The sequence spans 289 residues: RING-H2 finger protein ATL29 (289 aa).

The chain crosses the membrane as a helical span at residues 25–45 (VILTVILLVFFFIGFFTLYFC). The segment at 110 to 152 (CAICLLEFDGDHVLRLLTTCYHVFHQECIDLWFESHRTCPVCR) adopts an RING-type; atypical zinc-finger fold. The segment at 179–237 (TSDDEEDDHHRQQTTTQIDTWPSSGQTSSIKKEQNLPEKFSRSHSTGHSIVRNKPEEED) is disordered. Positions 191–207 (QTTTQIDTWPSSGQTSS) are enriched in polar residues. The span at 208–219 (IKKEQNLPEKFS) shows a compositional bias: basic and acidic residues.

Belongs to the RING-type zinc finger family. ATL subfamily.

It localises to the membrane. It carries out the reaction S-ubiquitinyl-[E2 ubiquitin-conjugating enzyme]-L-cysteine + [acceptor protein]-L-lysine = [E2 ubiquitin-conjugating enzyme]-L-cysteine + N(6)-ubiquitinyl-[acceptor protein]-L-lysine.. Its pathway is protein modification; protein ubiquitination. The protein is RING-H2 finger protein ATL29 (ATL29) of Arabidopsis thaliana (Mouse-ear cress).